Reading from the N-terminus, the 426-residue chain is Glutamate-1-semialdehyde 2,1-aminomutase (426 aa).

Lys-265 bears the N6-(pyridoxal phosphate)lysine mark.

Belongs to the class-III pyridoxal-phosphate-dependent aminotransferase family. HemL subfamily. In terms of assembly, homodimer. Pyridoxal 5'-phosphate is required as a cofactor.

Its subcellular location is the cytoplasm. The enzyme catalyses (S)-4-amino-5-oxopentanoate = 5-aminolevulinate. It participates in porphyrin-containing compound metabolism; protoporphyrin-IX biosynthesis; 5-aminolevulinate from L-glutamyl-tRNA(Glu): step 2/2. The sequence is that of Glutamate-1-semialdehyde 2,1-aminomutase from Neisseria gonorrhoeae (strain ATCC 700825 / FA 1090).